The sequence spans 370 residues: D-alanine--D-alanine ligase (370 aa).

Residues 142-348 (KQILTHHHIQ…YTALIDQLIQ (207 aa)) form the ATP-grasp domain. 172 to 227 (QAHVGDHLFIKPANQGSSIGIHKAENEQEYLDGLADAFKYDYKILVEESIDNPREV) contacts ATP. 3 residues coordinate Mg(2+): Asp-302, Glu-315, and Asn-317.

The protein belongs to the D-alanine--D-alanine ligase family. Mg(2+) is required as a cofactor. It depends on Mn(2+) as a cofactor.

The protein resides in the cytoplasm. It carries out the reaction 2 D-alanine + ATP = D-alanyl-D-alanine + ADP + phosphate + H(+). Its pathway is cell wall biogenesis; peptidoglycan biosynthesis. Functionally, cell wall formation. This is D-alanine--D-alanine ligase from Lactiplantibacillus plantarum (strain ATCC BAA-793 / NCIMB 8826 / WCFS1) (Lactobacillus plantarum).